The sequence spans 187 residues: UPF0301 protein Cpar_0662 (187 aa).

This sequence belongs to the UPF0301 (AlgH) family.

The chain is UPF0301 protein Cpar_0662 from Chlorobaculum parvum (strain DSM 263 / NCIMB 8327) (Chlorobium vibrioforme subsp. thiosulfatophilum).